We begin with the raw amino-acid sequence, 113 residues long: Large ribosomal subunit protein uL24 (113 aa).

Belongs to the universal ribosomal protein uL24 family. In terms of assembly, part of the 50S ribosomal subunit.

One of two assembly initiator proteins, it binds directly to the 5'-end of the 23S rRNA, where it nucleates assembly of the 50S subunit. Functionally, one of the proteins that surrounds the polypeptide exit tunnel on the outside of the subunit. The polypeptide is Large ribosomal subunit protein uL24 (Chlamydia felis (strain Fe/C-56) (Chlamydophila felis)).